Here is a 413-residue protein sequence, read N- to C-terminus: Aspartate aminotransferase, cytoplasmic (413 aa).

L-aspartate-binding residues include Gly-39 and Trp-141. At Ser-149 the chain carries Phosphoserine. Residue Asn-195 coordinates L-aspartate. An N6-(pyridoxal phosphate)lysine modification is found at Lys-259. Residue Arg-387 participates in L-aspartate binding.

Belongs to the class-I pyridoxal-phosphate-dependent aminotransferase family. In terms of assembly, homodimer. Pyridoxal 5'-phosphate serves as cofactor.

Its subcellular location is the cytoplasm. The catalysed reaction is L-aspartate + 2-oxoglutarate = oxaloacetate + L-glutamate. The enzyme catalyses L-cysteine + 2-oxoglutarate = 2-oxo-3-sulfanylpropanoate + L-glutamate. It carries out the reaction (2S)-2-aminobutanoate + 2-oxoglutarate = 2-oxobutanoate + L-glutamate. It catalyses the reaction 3-sulfino-L-alanine + 2-oxoglutarate = 3-sulfinopyruvate + L-glutamate. Its function is as follows. Biosynthesis of L-glutamate from L-aspartate or L-cysteine. Important regulator of levels of glutamate, the major excitatory neurotransmitter of the vertebrate central nervous system. Acts as a scavenger of glutamate in brain neuroprotection. The aspartate aminotransferase activity is involved in hepatic glucose synthesis during development and in adipocyte glyceroneogenesis. Using L-cysteine as substrate, regulates levels of mercaptopyruvate, an important source of hydrogen sulfide. Mercaptopyruvate is converted into H(2)S via the action of 3-mercaptopyruvate sulfurtransferase (3MST). Hydrogen sulfide is an important synaptic modulator and neuroprotectant in the brain. The polypeptide is Aspartate aminotransferase, cytoplasmic (Pongo abelii (Sumatran orangutan)).